Consider the following 71-residue polypeptide: Small ribosomal subunit protein bS21 (71 aa).

The segment at 48–71 (ENATLAKRHAKRNARENARNTRLY) is disordered. Residues 60 to 71 (NARENARNTRLY) are compositionally biased toward basic and acidic residues.

It belongs to the bacterial ribosomal protein bS21 family.

The chain is Small ribosomal subunit protein bS21 from Haemophilus influenzae (strain 86-028NP).